A 171-amino-acid chain; its full sequence is Zinc finger A20 and AN1 domain-containing stress-associated protein 8 (171 aa).

The A20-type zinc-finger motif lies at 11 to 45; the sequence is PEGPILCINNCGFFGSAATMNMCSKCHKEMIMKQE. Residues Cys-17, Cys-21, Cys-33, Cys-36, Cys-112, Cys-115, Cys-126, Cys-128, Cys-133, His-136, His-142, and Cys-144 each contribute to the Zn(2+) site. An AN1-type zinc finger spans residues 106-152; it reads REGPNRCSTCRKRVGLTGFNCRCGNLYCAMHRYSDKHDCQFDYRTAA.

In terms of biological role, may be involved in environmental stress response. The polypeptide is Zinc finger A20 and AN1 domain-containing stress-associated protein 8 (SAP8) (Oryza sativa subsp. indica (Rice)).